The chain runs to 221 residues: Protein-L-isoaspartate O-methyltransferase (221 aa).

Residue serine 70 is part of the active site.

It belongs to the methyltransferase superfamily. L-isoaspartyl/D-aspartyl protein methyltransferase family.

Its subcellular location is the cytoplasm. It catalyses the reaction [protein]-L-isoaspartate + S-adenosyl-L-methionine = [protein]-L-isoaspartate alpha-methyl ester + S-adenosyl-L-homocysteine. Functionally, catalyzes the methyl esterification of L-isoaspartyl residues in peptides and proteins that result from spontaneous decomposition of normal L-aspartyl and L-asparaginyl residues. It plays a role in the repair and/or degradation of damaged proteins. The protein is Protein-L-isoaspartate O-methyltransferase of Alkalilimnicola ehrlichii (strain ATCC BAA-1101 / DSM 17681 / MLHE-1).